The sequence spans 497 residues: Guanosine-5'-triphosphate,3'-diphosphate pyrophosphatase (497 aa).

It belongs to the GppA/Ppx family. GppA subfamily.

The enzyme catalyses guanosine 3'-diphosphate 5'-triphosphate + H2O = guanosine 3',5'-bis(diphosphate) + phosphate + H(+). It participates in purine metabolism; ppGpp biosynthesis; ppGpp from GTP: step 2/2. Its function is as follows. Catalyzes the conversion of pppGpp to ppGpp. Guanosine pentaphosphate (pppGpp) is a cytoplasmic signaling molecule which together with ppGpp controls the 'stringent response', an adaptive process that allows bacteria to respond to amino acid starvation, resulting in the coordinated regulation of numerous cellular activities. In Aliivibrio fischeri (strain MJ11) (Vibrio fischeri), this protein is Guanosine-5'-triphosphate,3'-diphosphate pyrophosphatase.